The primary structure comprises 1649 residues: Cortactin-binding protein 2 (1649 aa).

The segment at 1–23 is disordered; that stretch reads MATDGASCEPDLSRAPEDAAGAA. A coiled-coil region spans residues 119 to 276; that stretch reads RKMQERMSAQ…EQLKRGSDSK (158 aa). Disordered regions lie at residues 366 to 440 and 454 to 478; these read IGVS…LHPG and GNAN…SPTS. 2 stretches are compositionally biased toward low complexity: residues 368–379 and 386–396; these read VSVPAFPPSSAS and PSTGSTPDPTS. Over residues 411-422 the composition is skewed to polar residues; it reads QTPGITPQNSQA. Arginine 498 carries the asymmetric dimethylarginine modification. A disordered region spans residues 499–616; the sequence is FTGPQAGAPP…SSPQLPPKPS (118 aa). Polar residues predominate over residues 583 to 593; the sequence is TVASPPSSLPQ. ANK repeat units lie at residues 709-739, 743-772, 776-805, 809-838, and 842-871; these read GRPT…DINY, DGHS…QVNA, NGFT…NINH, GGQT…DRSV, and DGWT…PAHG. Positions 872-897 are disordered; it reads NSFSEEESESGVFDLDGGEESPEGKS. The ANK 6 repeat unit spans residues 912–942; the sequence is EGWTAAHIAASKGFKNCLEILCRHGGLETER. The interval 1444–1482 is disordered; that stretch reads SCSKKKGESGAWRRVNTSPRRKSSRFSLPTWNKPDLSNE. Serine 1524 carries the post-translational modification Phosphoserine. The segment at 1616-1649 is disordered; it reads PRSKVTQCSQNTKRSSSSSNTRQIEINNNSKEEN. The span at 1624 to 1638 shows a compositional bias: low complexity; it reads SQNTKRSSSSSNTRQ. Polar residues predominate over residues 1639 to 1649; sequence IEINNNSKEEN.

Interacts with CTTN/cortactin SH3 domain. Interacts with STRN, STRN4/zinedin and MOB4/phocein; this interactions mediate the association with the STRIPAK core complex and may regulate dendritic spine distribution of the STRIPAK complex in hippocampal neurons. Activation of glutamate receptors weakens the interaction with STRN and STRN4.

Its subcellular location is the cytoplasm. The protein resides in the cell cortex. The protein localises to the cell projection. It is found in the dendritic spine. Regulates the dendritic spine distribution of CTTN/cortactin in hippocampal neurons, and thus controls dendritic spinogenesis and dendritic spine maintenance. Associates with the striatin-interacting phosphatase and kinase (STRIPAK) core complex to regulate dendritic spine distribution of the STRIPAK complex in hippocampal neurons. This is Cortactin-binding protein 2 (CTTNBP2) from Aotus nancymaae (Ma's night monkey).